The primary structure comprises 113 residues: Transcriptional regulator RamA (113 aa).

Positions 9–107 constitute an HTH araC/xylS-type domain; sequence DTIVEWIDDN…NQPPGAYRKE (99 aa). 2 consecutive DNA-binding regions (H-T-H motif) follow at residues 26–47 and 74–97; these read DDIA…LQYK and VYDI…TRTF.

Monomer. Interacts with the C-terminus of RNAP subunit RpoA when part of class I or class II promoter complexes. Also interacts with sigma-70/RpoD in class II promoter complexes.

Its function is as follows. Transcriptional regulator. Binds to regulatory regions of target genes, including its own gene, efflux pump operon acrAB, antisense RNA gene micF, and various genes involved in lipid A biosynthesis, including lpxO and lpxL-2. Regulates expression of many genes, perhaps including its own; activates various lipid A biosynthetic genes, and as a result of activating acrAB, confers multidrug resistance. Plays a role in virulence and survival in host cells. The sequence is that of Transcriptional regulator RamA from Klebsiella pneumoniae subsp. pneumoniae (strain HS11286).